Consider the following 323-residue polypeptide: MMTRVECFNPHRWIILHVAIIIQSKANAQSFSPSPPDLQTGHTPSKTTVFAVLVTLFFLTGLLSVYIRHCARSNPDSSTRYFRNRANDGSSRRGGLDNAVVESFPVFAYSSVKESKIGSKDLECAICLNELEDHETVRLLPICNHLFHIDCIDTWLYSHATCPVCRSNLTAKSNKPGDEDDGVPLAAMRDHVVVDIETVEVAKSHHRRLSSEISGKFPRSNSTGHSMDRFSDGTERFTLRLPDDVKMRLMAVKGRRLKRTRSFDVDLTAEHYCRSGEESSNTIGSGAKSGRVNWPDRWGLTLFVSKSNSGSVRSQKSNGEPLK.

Positions M1 to A28 are cleaved as a signal peptide. Residues T47–I67 traverse the membrane as a helical segment. The RING-type; atypical zinc-finger motif lies at C124–R166. Residues S210 to R229 are disordered.

It belongs to the RING-type zinc finger family. ATL subfamily.

It localises to the membrane. The catalysed reaction is S-ubiquitinyl-[E2 ubiquitin-conjugating enzyme]-L-cysteine + [acceptor protein]-L-lysine = [E2 ubiquitin-conjugating enzyme]-L-cysteine + N(6)-ubiquitinyl-[acceptor protein]-L-lysine.. It participates in protein modification; protein ubiquitination. The sequence is that of RING-H2 finger protein ATL32 (ATL32) from Arabidopsis thaliana (Mouse-ear cress).